Here is a 278-residue protein sequence, read N- to C-terminus: Large ribosomal subunit protein uL2 (278 aa).

Residues 224–262 form a disordered region; it reads VMNPVDHPLGGGEGRTSGGRHPVTPWGKPTKGFKTRKTR.

It belongs to the universal ribosomal protein uL2 family. In terms of assembly, part of the 50S ribosomal subunit. Forms a bridge to the 30S subunit in the 70S ribosome.

One of the primary rRNA binding proteins. Required for association of the 30S and 50S subunits to form the 70S ribosome, for tRNA binding and peptide bond formation. It has been suggested to have peptidyltransferase activity; this is somewhat controversial. Makes several contacts with the 16S rRNA in the 70S ribosome. In Leptospira biflexa serovar Patoc (strain Patoc 1 / Ames), this protein is Large ribosomal subunit protein uL2.